We begin with the raw amino-acid sequence, 282 residues long: Large ribosomal subunit protein uL4c (282 aa).

Residues 1 to 43 constitute a chloroplast transit peptide; that stretch reads MAASLSFFSSSIFLSNPNIQSSKHLLFRSPKQLSVAAIATIRS. 2 disordered regions span residues 86–133 and 251–282; these read RNQR…GGVV and RYGDENEWEDEEEDDQEDNDGGEAEESTESSE. Acidic residues predominate over residues 255–282; sequence ENEWEDEEEDDQEDNDGGEAEESTESSE.

It belongs to the universal ribosomal protein uL4 family. As to quaternary structure, part of the 50S ribosomal subunit.

The protein localises to the plastid. Its subcellular location is the chloroplast. Functionally, this protein binds directly and specifically to 23S rRNA. May play a role in plastid transcriptional regulation. The chain is Large ribosomal subunit protein uL4c (RPL4) from Nicotiana tabacum (Common tobacco).